The chain runs to 846 residues: Translation initiation factor IF-2 (846 aa).

The tr-type G domain maps to 345–512 (SRAPVVTIMG…AVLLQSEVLE (168 aa)). The tract at residues 354–361 (GHVDHGKT) is G1. Position 354–361 (354–361 (GHVDHGKT)) interacts with GTP. A G2 region spans residues 379–383 (GITQH). A G3 region spans residues 400–403 (DTPG). GTP is bound by residues 400–404 (DTPGH) and 454–457 (NKID). Residues 454–457 (NKID) form a G4 region. The segment at 490–492 (SAK) is G5.

The protein belongs to the TRAFAC class translation factor GTPase superfamily. Classic translation factor GTPase family. IF-2 subfamily.

The protein localises to the cytoplasm. Functionally, one of the essential components for the initiation of protein synthesis. Protects formylmethionyl-tRNA from spontaneous hydrolysis and promotes its binding to the 30S ribosomal subunits. Also involved in the hydrolysis of GTP during the formation of the 70S ribosomal complex. The chain is Translation initiation factor IF-2 from Francisella tularensis subsp. holarctica (strain FTNF002-00 / FTA).